The following is a 157-amino-acid chain: Endoribonuclease YbeY (157 aa).

Residues H122, H126, and H132 each contribute to the Zn(2+) site.

The protein belongs to the endoribonuclease YbeY family. Requires Zn(2+) as cofactor.

It is found in the cytoplasm. In terms of biological role, single strand-specific metallo-endoribonuclease involved in late-stage 70S ribosome quality control and in maturation of the 3' terminus of the 16S rRNA. The chain is Endoribonuclease YbeY from Bacillus subtilis (strain 168).